The chain runs to 206 residues: Small ribosomal subunit protein eS1 (206 aa).

Belongs to the eukaryotic ribosomal protein eS1 family.

This chain is Small ribosomal subunit protein eS1, found in Halobacterium salinarum (strain ATCC 29341 / DSM 671 / R1).